A 465-amino-acid chain; its full sequence is VGFKAGVKDYKLTYYTPDYETKDTDILAAFRVTPQPGVPPEEAGAAVAAESSTGTWTTVWTDGLTSLDRYKGRCYHIESVAGEENQYIAYVAYPLDLFEEGSVTNMFTSIVGNVFGFKALRALRLEDLRIPPAYTKTFQGPPHGIQVERDKLNKYGRPLLGCTIKPKLGLSAKNYGRAVYECLRGGLDFTKDDENVNSQPFMRWRDRFLFCAEAIYKAQAETGEIKGHYLNATAGTCEEMIKRAVFARELGVPIVMHDYLTGGFTANTSLAHYCRDNGLLLHIHRAMHAVIDRQKNHGMHFRVLAKALRLSGGDHIHAGTVVGKLEGEREITLGFVVLLRDDFVEKDRSRGIYFTQDWVSIPGVLPVASGGIHVWHMPALTEIFGDDSVLQFGGGTLGHPWGNAPGAVANRVALEACVRARNEGRDLAREGNEIIREASKWSLELAAACEVWKEIKFDFEAMDTL.

At Lys4 the chain carries N6,N6,N6-trimethyllysine. Substrate contacts are provided by Asn113 and Thr163. Lys165 (proton acceptor) is an active-site residue. Lys167 contributes to the substrate binding site. Mg(2+)-binding residues include Lys191, Asp193, and Glu194. Residue Lys191 is modified to N6-carboxylysine. His284 (proton acceptor) is an active-site residue. Substrate-binding residues include Arg285, His317, and Ser369.

Belongs to the RuBisCO large chain family. Type I subfamily. In terms of assembly, heterohexadecamer of 8 large chains and 8 small chains; disulfide-linked. The disulfide link is formed within the large subunit homodimers. Mg(2+) is required as a cofactor. In terms of processing, the disulfide bond which can form in the large chain dimeric partners within the hexadecamer appears to be associated with oxidative stress and protein turnover.

It is found in the plastid. The protein localises to the chloroplast. It carries out the reaction 2 (2R)-3-phosphoglycerate + 2 H(+) = D-ribulose 1,5-bisphosphate + CO2 + H2O. The catalysed reaction is D-ribulose 1,5-bisphosphate + O2 = 2-phosphoglycolate + (2R)-3-phosphoglycerate + 2 H(+). RuBisCO catalyzes two reactions: the carboxylation of D-ribulose 1,5-bisphosphate, the primary event in carbon dioxide fixation, as well as the oxidative fragmentation of the pentose substrate in the photorespiration process. Both reactions occur simultaneously and in competition at the same active site. The chain is Ribulose bisphosphate carboxylase large chain from Senega cruciata (Cross-leaved milkwort).